The following is a 1322-amino-acid chain: Ice nucleation protein InaA (1322 aa).

The tract at residues 162–1281 (ATYGSTLSGT…LTAGENSVLI (1120 aa)) is octapeptide periodicity. 4 stretches are compositionally biased toward polar residues: residues 271 to 302 (SLTAGYGSTQTAGEDSSLTAGYGSTQTAQKGS), 327 to 350 (TQTAGEESTQTAGYGSTQTAQKGS), 373 to 398 (GSTQTAGEDSSLTAGYGSTQTAQKGS), and 423 to 446 (TQTAGEESTQTAGYGSTQTAQKGS). 4 disordered regions span residues 271-303 (SLTAGYGSTQTAGEDSSLTAGYGSTQTAQKGSD), 327-358 (TQTAGEESTQTAGYGSTQTAQKGSDLTAGYGS), 372-399 (YGSTQTAGEDSSLTAGYGSTQTAQKGSD), and 423-448 (TQTAGEESTQTAGYGSTQTAQKGSDL).

This sequence belongs to the bacterial ice nucleation protein family.

It localises to the cell outer membrane. In terms of biological role, ice nucleation proteins enable bacteria to nucleate crystallization in supercooled water. The sequence is that of Ice nucleation protein InaA (inaA) from Pantoea ananas (Erwinia uredovora).